Consider the following 418-residue polypeptide: Lariat debranching enzyme (418 aa).

Residues Cys-8, His-10, Asp-39, and Asn-84 each contribute to the a divalent metal cation site. Residues 124–154 (SGIYNERHYRSGHFERPPYNESTIRSVYHVR) form a lariat recognition loop region. 3 residues coordinate a divalent metal cation: His-174, His-226, and His-228. The interval 372 to 418 (GERTDIPASLAPSDLPTYDSEEIPIDDIDEIEEMEEAKADDHTRDDA) is disordered. Residues 390–406 (DSEEIPIDDIDEIEEME) are compositionally biased toward acidic residues. Basic and acidic residues predominate over residues 407 to 418 (EAKADDHTRDDA).

The protein belongs to the lariat debranching enzyme family. It depends on Fe(2+) as a cofactor. Requires Zn(2+) as cofactor. Mn(2+) serves as cofactor. In terms of tissue distribution, widely expressed. Expressed in roots, stems, cauline and rosette leaves, flower buds and siliques.

It is found in the nucleus. Its activity is regulated as follows. Active in presence of diverse metals including Fe(2+), Zn(2+), Mn(2+). Binds two metal cations in two adjacent alpha and beta metal-binding pockets. Functionally, cleaves the 2'-5' phosphodiester linkage at the branch point of lariat intron pre-mRNAs after splicing and converts them into linear molecules that are subsequently degraded. It thereby facilitates ribonucleotide turnover. It may also participate in retrovirus replication via an RNA lariat intermediate in cDNA synthesis. Plays en essential role during embryogenesis. The sequence is that of Lariat debranching enzyme (DBR1) from Arabidopsis thaliana (Mouse-ear cress).